The following is an 838-amino-acid chain: Rab effector MyRIP (838 aa).

The RabBD domain maps to 4–124 (KLDLSGLSNN…TQSLEWFYNN (121 aa)). The segment at 58–112 (KFNEHCCIRCCSPFTFLLNPKRQCLDCHYNICKSCCSYSQSERGYICAACQKSRH) adopts an FYVE-type zinc-finger fold. A coiled-coil region spans residues 188-237 (ADTLTVALRVAEEAIEEAIAKAENYKDSLEKQNEARYLHEHKEELIEELA). Composition is skewed to polar residues over residues 263–290 (QNQKSELPSPTSTQNPLATQNSHSTSQP) and 451–484 (TFTQHPPITSPSSGQYTNTETLNSDSETSPSPST). 4 disordered regions span residues 263–331 (QNQK…TEVE), 444–501 (SQHD…ETHL), 525–570 (NFNP…LYSA), and 681–838 (ERDV…EKRN). Composition is skewed to basic and acidic residues over residues 697–736 (NKQEDRVSEKDSGKLRPKERRESKRESKLREMEKQSERQT) and 753–838 (RQMK…EKRN). Residues 714–833 (KERRESKRES…DLEKKRKSIR (120 aa)) are a coiled coil.

In terms of assembly, interacts with prkar2aa.

It localises to the cytoplasm. It is found in the perinuclear region. Its subcellular location is the cytoplasmic vesicle. The protein resides in the secretory vesicle. Its function is as follows. May link secretory vesicles to actin filaments. May function as a protein kinase A-anchoring protein (AKAP). May act as a scaffolding protein that links PKA to components of the exocytosis machinery, thus facilitating exocytosis. This chain is Rab effector MyRIP (myrip), found in Danio rerio (Zebrafish).